A 142-amino-acid polypeptide reads, in one-letter code: Hemoglobin subunit alpha (142 aa).

The region spanning 1 to 142 (VLSAADKNNV…VSTVLTSKYR (142 aa)) is the Globin domain. Phosphoserine is present on Ser-3. An N6-succinyllysine mark is found at Lys-7 and Lys-11. Lys-16 carries the N6-acetyllysine; alternate modification. N6-succinyllysine; alternate is present on Lys-16. The residue at position 24 (Tyr-24) is a Phosphotyrosine. Position 35 is a phosphoserine (Ser-35). N6-succinyllysine is present on Lys-40. His-58 contributes to the O2 binding site. His-87 is a heme b binding site. A Phosphoserine modification is found at Ser-102. Thr-108 carries the post-translational modification Phosphothreonine. Ser-125 bears the Phosphoserine mark. Phosphothreonine occurs at positions 135 and 138. At Ser-139 the chain carries Phosphoserine.

Belongs to the globin family. In terms of assembly, heterotetramer of two alpha chains and two beta chains. In terms of tissue distribution, red blood cells.

In terms of biological role, involved in oxygen transport from the lung to the various peripheral tissues. Its function is as follows. Hemopressin acts as an antagonist peptide of the cannabinoid receptor CNR1. Hemopressin-binding efficiently blocks cannabinoid receptor CNR1 and subsequent signaling. In Procavia capensis habessinica (Abyssinian hyrax), this protein is Hemoglobin subunit alpha (HBA).